A 201-amino-acid chain; its full sequence is Lipoprotein signal peptidase (201 aa).

2 helical membrane passes run 73–93 and 97–117; these read SNAI…YLMI and TIGS…NLID. Catalysis depends on residues aspartate 126 and aspartate 144. The helical transmembrane segment at 135–155 threads the bilayer; it reads YSFPVFNLADCFITIGVIILI.

It belongs to the peptidase A8 family.

It localises to the cell inner membrane. It catalyses the reaction Release of signal peptides from bacterial membrane prolipoproteins. Hydrolyzes -Xaa-Yaa-Zaa-|-(S,diacylglyceryl)Cys-, in which Xaa is hydrophobic (preferably Leu), and Yaa (Ala or Ser) and Zaa (Gly or Ala) have small, neutral side chains.. It participates in protein modification; lipoprotein biosynthesis (signal peptide cleavage). Functionally, this protein specifically catalyzes the removal of signal peptides from prolipoproteins. In Rickettsia africae (strain ESF-5), this protein is Lipoprotein signal peptidase.